A 256-amino-acid chain; its full sequence is DNA repair protein RecO (256 aa).

It belongs to the RecO family.

Functionally, involved in DNA repair and RecF pathway recombination. The sequence is that of DNA repair protein RecO from Bacillus pumilus (strain SAFR-032).